Consider the following 183-residue polypeptide: Ribosome-recycling factor (183 aa).

This sequence belongs to the RRF family.

It is found in the cytoplasm. Its function is as follows. Responsible for the release of ribosomes from messenger RNA at the termination of protein biosynthesis. May increase the efficiency of translation by recycling ribosomes from one round of translation to another. The protein is Ribosome-recycling factor of Ureaplasma parvum serovar 3 (strain ATCC 27815 / 27 / NCTC 11736).